Here is a 305-residue protein sequence, read N- to C-terminus: Olfactory receptor 9G1 (305 aa).

Over 1–24 the chain is Extracellular; the sequence is MQRSNHTVTEFILLGFTTDPGMQL. N-linked (GlcNAc...) asparagine glycosylation is present at Asn-5. Residues 25-45 traverse the membrane as a helical segment; it reads GLFVVFLGVYSLTVVGNSTLI. Residues 46–53 are Cytoplasmic-facing; sequence VLICNDSC. The helical transmembrane segment at 54 to 74 threads the bilayer; the sequence is LHTPMYFFTGNLSFLDLWYSS. Residues 75–98 lie on the Extracellular side of the membrane; it reads VYTPKILVTCISEDKSISFAGCLC. Cys-96 and Cys-188 are disulfide-bonded. A helical transmembrane segment spans residues 99–119; that stretch reads QFFFSAGLAYSECYLLAAVAY. Over 120–138 the chain is Cytoplasmic; sequence DRYVAISKPLLYAQAMSIK. A helical membrane pass occupies residues 139–159; the sequence is LCALLVAVSYCGGFINSSIIT. The Extracellular segment spans residues 160-196; that stretch reads KKTFSFNFCRENIIDDFFCDLLPLVELACGEKGGYKI. Residues 197 to 216 form a helical membrane-spanning segment; sequence MMYFLLASNVICPAVLILAS. Over 217-236 the chain is Cytoplasmic; the sequence is YLFIITSVLRISSSKGYLKA. The chain crosses the membrane as a helical span at residues 237–257; sequence FSTCSSHLTSVTLYYGSILYI. Topologically, residues 258 to 270 are extracellular; the sequence is YALPRSSYSFDMD. A helical transmembrane segment spans residues 271 to 291; sequence KIVSTFYTVVFPMLNLMIYSL. At 292-305 the chain is on the cytoplasmic side; sequence RNKDVKEALKKLLP.

It belongs to the G-protein coupled receptor 1 family.

It is found in the cell membrane. Its function is as follows. Odorant receptor. In Homo sapiens (Human), this protein is Olfactory receptor 9G1 (OR9G1).